Reading from the N-terminus, the 160-residue chain is MSADANPDLKSADIGLIQQILPHRYPFLLVDKVVDIDGYQSARGIKNVTMNEPHFQGHFPGTPIMPGVTIVEAMAQTSGVMLGVGMDLIGTDMLIYFMNIDKCKFRRKVVPGDVLEMHVETVRGKPGGKIFKFSGRATVDGELAAEAEFTAMIDRDGKDG.

Residue H58 is part of the active site.

Belongs to the thioester dehydratase family. FabZ subfamily.

Its subcellular location is the cytoplasm. It carries out the reaction a (3R)-hydroxyacyl-[ACP] = a (2E)-enoyl-[ACP] + H2O. Its function is as follows. Involved in unsaturated fatty acids biosynthesis. Catalyzes the dehydration of short chain beta-hydroxyacyl-ACPs and long chain saturated and unsaturated beta-hydroxyacyl-ACPs. This chain is 3-hydroxyacyl-[acyl-carrier-protein] dehydratase FabZ, found in Ruegeria sp. (strain TM1040) (Silicibacter sp.).